Reading from the N-terminus, the 602-residue chain is Potassium voltage-gated channel subfamily A member 5 (602 aa).

Residues 1–107 (MEISLVPMEN…EDQAPQDSGS (107 aa)) form a disordered region. Residues 1–202 (MEISLVPMEN…FYQLGDEAME (202 aa)) are tetramerization domain. Over 1-238 (MEISLVPMEN…LIFEYPESSG (238 aa)) the chain is Cytoplasmic. A compositionally biased stretch (pro residues) spans 66–78 (PLPPMPQELPQPR). Residue Ser81 is modified to Phosphoserine; by CK2 and PKA. A Glycyl lysine isopeptide (Lys-Gly) (interchain with G-Cter in SUMO) cross-link involves residue Lys212. The chain crosses the membrane as a helical span at residues 239–260 (SARAIAIVSVLVILISIITFCL). Residues 261-314 (ETLPEFRDERELLRHPPVPPQPPAPAPGANGSGSGVLSSGPTVAPLLPRTLADP) lie on the Extracellular side of the membrane. Positions 274 to 297 (RHPPVPPQPPAPAPGANGSGSGVL) are disordered. Over residues 276-286 (PPVPPQPPAPA) the composition is skewed to pro residues. Asn290 carries an N-linked (GlcNAc...) asparagine glycan. Residues 315–336 (FFIVETTCVIWFTFELLVRFFA) form a helical membrane-spanning segment. Cys337 carries S-palmitoyl cysteine lipidation. Topologically, residues 337-347 (CPSKAEFSRNI) are cytoplasmic. The helical transmembrane segment at 348–368 (MNIIDIVAIFPYFITLGTELA) threads the bilayer. Residues 369–384 (EQQPGGGGQNGQQAMS) are Extracellular-facing. Residues 385-405 (LAILRVIRLVRVFRIFKLSRH) traverse the membrane as a helical; Voltage-sensor segment. Residues 406 to 420 (SKGLQILGKTLQASM) are Cytoplasmic-facing. An S4-S5 linker region spans residues 407–420 (KGLQILGKTLQASM). The helical transmembrane segment at 421–442 (RELGLLIFFLFIGVILFSSAVY) threads the bilayer. Residues 443-456 (FAEADNQGSHFSSI) lie on the Extracellular side of the membrane. Positions 457–468 (PDAFWWAVVTMT) form an intramembrane region, helical. The Selectivity filter motif lies at 469–474 (TVGYGD). Residues 469 to 476 (TVGYGDMR) lie within the membrane without spanning it. Residues 477–483 (PITVGGK) are Extracellular-facing. A helical membrane pass occupies residues 484–512 (IVGSLCAIAGVLTIALPVPVIVSNFNYFY). Topologically, residues 513 to 602 (HRETDHEEQA…CLDTSRETDL (90 aa)) are cytoplasmic. A Glycyl lysine isopeptide (Lys-Gly) (interchain with G-Cter in SUMO) cross-link involves residue Lys525. A phosphoserine; by PKA mark is found at Ser535, Ser546, and Ser569. The PDZ-binding signature appears at 600–602 (TDL).

The protein belongs to the potassium channel family. A (Shaker) (TC 1.A.1.2) subfamily. Kv1.5/KCNA5 sub-subfamily. Homotetramer and heterotetramer of potassium channel proteins. Interacts with DLG1, which enhances channel currents. Forms a ternary complex with DLG1 and CAV3. Interacts with KCNAB1. Interacts with UBE2I. Interacts with XIRP2; the interaction is required for normal action potential configuration in the heart. In terms of processing, glycosylated. Sumoylated on Lys-212, and Lys-525, preferentially with SUMO3. Sumoylation regulates the voltage sensitivity of the channel. In terms of tissue distribution, expressed in the heart (at protein level). Expressed in the brain and weakly expressed in the thymus, skeletal muscle and spleen.

It localises to the cell membrane. It carries out the reaction K(+)(in) = K(+)(out). Its function is as follows. Voltage-gated potassium channel that mediates transmembrane potassium transport in excitable membranes. Forms tetrameric potassium-selective channels through which potassium ions pass in accordance with their electrochemical gradient. The channel alternates between opened and closed conformations in response to the voltage difference across the membrane. Can form functional homotetrameric channels and heterotetrameric channels that contain variable proportions of KCNA1, KCNA2, KCNA4, KCNA5, and possibly other family members as well; channel properties depend on the type of alpha subunits that are part of the channel. Channel properties are modulated by cytoplasmic beta subunits that regulate the subcellular location of the alpha subunits and promote rapid inactivation. Homotetrameric channels display rapid activation and slow inactivation. Required for normal electrical conduction including formation of the infranodal ventricular conduction system and normal action potential configuration, as a result of its interaction with XIRP2. May play a role in regulating the secretion of insulin in normal pancreatic islets. Functionally, voltage-gated potassium channel that mediates transmembrane potassium transport in excitable membranes. Forms tetrameric potassium-selective channels through which potassium ions pass in accordance with their electrochemical gradient. The channel alternates between opened and closed conformations in response to the voltage difference across the membrane. In terms of biological role, inactive. Inhibits expression of isoform 1 and isoform 2. The polypeptide is Potassium voltage-gated channel subfamily A member 5 (Kcna5) (Mus musculus (Mouse)).